The sequence spans 200 residues: Dephospho-CoA kinase (200 aa).

A DPCK domain is found at 4–200; it reads VIGLTGGIAS…AILKKWNIID (197 aa). 12–17 is a binding site for ATP; it reads ASGKST.

It belongs to the CoaE family.

It localises to the cytoplasm. The catalysed reaction is 3'-dephospho-CoA + ATP = ADP + CoA + H(+). It participates in cofactor biosynthesis; coenzyme A biosynthesis; CoA from (R)-pantothenate: step 5/5. Catalyzes the phosphorylation of the 3'-hydroxyl group of dephosphocoenzyme A to form coenzyme A. The chain is Dephospho-CoA kinase from Bacillus thuringiensis subsp. konkukian (strain 97-27).